A 463-amino-acid chain; its full sequence is Argininosuccinate lyase (463 aa).

It belongs to the lyase 1 family. Argininosuccinate lyase subfamily.

Its subcellular location is the cytoplasm. The enzyme catalyses 2-(N(omega)-L-arginino)succinate = fumarate + L-arginine. Its pathway is amino-acid biosynthesis; L-arginine biosynthesis; L-arginine from L-ornithine and carbamoyl phosphate: step 3/3. This Streptococcus pneumoniae (strain JJA) protein is Argininosuccinate lyase.